A 571-amino-acid chain; its full sequence is Proline--tRNA ligase (571 aa).

This sequence belongs to the class-II aminoacyl-tRNA synthetase family. ProS type 1 subfamily. In terms of assembly, homodimer.

The protein resides in the cytoplasm. It catalyses the reaction tRNA(Pro) + L-proline + ATP = L-prolyl-tRNA(Pro) + AMP + diphosphate. Functionally, catalyzes the attachment of proline to tRNA(Pro) in a two-step reaction: proline is first activated by ATP to form Pro-AMP and then transferred to the acceptor end of tRNA(Pro). As ProRS can inadvertently accommodate and process non-cognate amino acids such as alanine and cysteine, to avoid such errors it has two additional distinct editing activities against alanine. One activity is designated as 'pretransfer' editing and involves the tRNA(Pro)-independent hydrolysis of activated Ala-AMP. The other activity is designated 'posttransfer' editing and involves deacylation of mischarged Ala-tRNA(Pro). The misacylated Cys-tRNA(Pro) is not edited by ProRS. The polypeptide is Proline--tRNA ligase (Pasteurella multocida (strain Pm70)).